Here is a 95-residue protein sequence, read N- to C-terminus: Large ribosomal subunit protein bL27 (95 aa).

Positions 1–25 (MAHKKGTGSTRNGRDSNAQRLGVKR) are disordered. Residues 7–19 (TGSTRNGRDSNAQ) show a composition bias toward polar residues.

This sequence belongs to the bacterial ribosomal protein bL27 family.

In Gloeobacter violaceus (strain ATCC 29082 / PCC 7421), this protein is Large ribosomal subunit protein bL27.